The following is a 71-amino-acid chain: UPF0435 protein SE_1565 (71 aa).

The protein belongs to the UPF0435 family.

This chain is UPF0435 protein SE_1565, found in Staphylococcus epidermidis (strain ATCC 12228 / FDA PCI 1200).